A 548-amino-acid polypeptide reads, in one-letter code: Cleavage and polyadenylation specificity factor subunit 6 (548 aa).

The RRM domain maps to isoleucine 81–lysine 161. Residues methionine 169 to glutamine 180 are compositionally biased toward polar residues. Disordered regions lie at residues methionine 169–valine 401 and leucine 473–arginine 548. Pro residues-rich tracts occupy residues proline 221–methionine 279, proline 294–glycine 362, and glycine 373–proline 384. Composition is skewed to basic and acidic residues over residues proline 385 to valine 400 and arginine 490 to arginine 500. Positions glutamate 501–arginine 511 are enriched in basic residues. A compositionally biased stretch (basic and acidic residues) spans aspartate 512–arginine 548.

This sequence belongs to the RRM CPSF6/7 family. In terms of assembly, component of the cleavage factor Im (CFIm) complex.

The protein resides in the nucleus. It localises to the nucleoplasm. The protein localises to the nucleus speckle. Its subcellular location is the cytoplasm. Its function is as follows. Component of the cleavage factor Im (CFIm) complex that functions as an activator of the pre-mRNA 3'-end cleavage and polyadenylation processing required for the maturation of pre-mRNA into functional mRNAs. CFIm contributes to the recruitment of multiprotein complexes on specific sequences on the pre-mRNA 3'-end, so called cleavage and polyadenylation signals (pA signals). Most pre-mRNAs contain multiple pA signals, resulting in alternative cleavage and polyadenylation (APA) producing mRNAs with variable 3'-end formation. The CFIm complex acts as a key regulator of cleavage and polyadenylation site choice during APA through its binding to 5'-UGUA-3' elements localized in the 3'-untranslated region (UTR) for a huge number of pre-mRNAs. Plays a role in mRNA export. This is Cleavage and polyadenylation specificity factor subunit 6 from Xenopus laevis (African clawed frog).